The following is a 376-amino-acid chain: MHTNVLNLSKKLINISSISPRDLGCQEILIKRLQLLGFFIERINLKDTKNFWAYRGKGKTVTFLGHTDVVPAGSTRKWKTSPFVATIKDGKLFGRGSADMKGSIAAMLIAVENFIKKFPNHKGRISFLITSDEETSGKNGIRKVVSILKEKKEVIDFCLVGEPTSEKILGDCVKNGRRGSLSADLMIYGTQGHIAYPKLFLNPIHNSIPFLLDLSNLIFDKGNLFFEPTSIQISKIFSEKNCTLNMIPGELRVFFNIRFNTLVNKKKIIRIVENLLNKYLIKYSIFWTYHAKPFLSSSNFLLNLLTKCIYKHTNIIPKIKNNGGTSDARFIFNLTDKIIEFGLPNLTIHKVNEYVYINDLLKLQNIYYSFLEKLLL.

Histidine 66 is a Zn(2+) binding site. The active site involves aspartate 68. Residue aspartate 99 participates in Zn(2+) binding. Residue glutamate 133 is the Proton acceptor of the active site. Zn(2+)-binding residues include glutamate 134, glutamate 162, and histidine 349.

It belongs to the peptidase M20A family. DapE subfamily. As to quaternary structure, homodimer. Zn(2+) serves as cofactor. The cofactor is Co(2+).

It carries out the reaction N-succinyl-(2S,6S)-2,6-diaminopimelate + H2O = (2S,6S)-2,6-diaminopimelate + succinate. It participates in amino-acid biosynthesis; L-lysine biosynthesis via DAP pathway; LL-2,6-diaminopimelate from (S)-tetrahydrodipicolinate (succinylase route): step 3/3. Functionally, catalyzes the hydrolysis of N-succinyl-L,L-diaminopimelic acid (SDAP), forming succinate and LL-2,6-diaminopimelate (DAP), an intermediate involved in the bacterial biosynthesis of lysine and meso-diaminopimelic acid, an essential component of bacterial cell walls. In Buchnera aphidicola subsp. Cinara cedri (strain Cc), this protein is Succinyl-diaminopimelate desuccinylase.